We begin with the raw amino-acid sequence, 423 residues long: Adenylosuccinate synthetase (423 aa).

Residues 12–18 and 40–42 each bind GTP; these read GDEGKGK and GHT. The active-site Proton acceptor is Asp13. Mg(2+) is bound by residues Asp13 and Gly40. Residues 13–16, 38–41, Thr129, Arg143, Gln221, Thr236, and Arg300 each bind IMP; these read DEGK and NAGH. The active-site Proton donor is the His41. Residue 296 to 302 participates in substrate binding; sequence AVTGRKR. GTP is bound by residues Arg302, 328–330, and 408–410; these read KSD and SVG.

It belongs to the adenylosuccinate synthetase family. Homodimer. Requires Mg(2+) as cofactor.

The protein localises to the cytoplasm. The enzyme catalyses IMP + L-aspartate + GTP = N(6)-(1,2-dicarboxyethyl)-AMP + GDP + phosphate + 2 H(+). It participates in purine metabolism; AMP biosynthesis via de novo pathway; AMP from IMP: step 1/2. Its function is as follows. Plays an important role in the de novo pathway of purine nucleotide biosynthesis. Catalyzes the first committed step in the biosynthesis of AMP from IMP. In Parabacteroides distasonis (strain ATCC 8503 / DSM 20701 / CIP 104284 / JCM 5825 / NCTC 11152), this protein is Adenylosuccinate synthetase.